A 292-amino-acid chain; its full sequence is ATP synthase gamma chain (292 aa).

This sequence belongs to the ATPase gamma chain family. In terms of assembly, F-type ATPases have 2 components, CF(1) - the catalytic core - and CF(0) - the membrane proton channel. CF(1) has five subunits: alpha(3), beta(3), gamma(1), delta(1), epsilon(1). CF(0) has three main subunits: a, b and c.

It localises to the cell inner membrane. Produces ATP from ADP in the presence of a proton gradient across the membrane. The gamma chain is believed to be important in regulating ATPase activity and the flow of protons through the CF(0) complex. The protein is ATP synthase gamma chain of Methylobacterium nodulans (strain LMG 21967 / CNCM I-2342 / ORS 2060).